Here is a 409-residue protein sequence, read N- to C-terminus: Proteasome-activating nucleotidase (409 aa).

The disordered stretch occupies residues 1–22 (MTLSSAGGSRSHRHNGGHSERD). Residues 23-58 (VEIRILKDKVRSLTKEKISLQKELEYYKNEITKLLS) adopt a coiled-coil conformation. ATP contacts are provided by residues 183 to 188 (GTGKTL) and H322.

Belongs to the AAA ATPase family. Homohexamer. The hexameric complex has a two-ring architecture resembling a top hat that caps the 20S proteasome core at one or both ends. Upon ATP-binding, the C-terminus of PAN interacts with the alpha-rings of the proteasome core by binding to the intersubunit pockets.

Its subcellular location is the cytoplasm. ATPase which is responsible for recognizing, binding, unfolding and translocation of substrate proteins into the archaeal 20S proteasome core particle. Is essential for opening the gate of the 20S proteasome via an interaction with its C-terminus, thereby allowing substrate entry and access to the site of proteolysis. Thus, the C-termini of the proteasomal ATPase function like a 'key in a lock' to induce gate opening and therefore regulate proteolysis. Unfolding activity requires energy from ATP hydrolysis, whereas ATP binding alone promotes ATPase-20S proteasome association which triggers gate opening, and supports translocation of unfolded substrates. The protein is Proteasome-activating nucleotidase of Aeropyrum pernix (strain ATCC 700893 / DSM 11879 / JCM 9820 / NBRC 100138 / K1).